Consider the following 758-residue polypeptide: Catalase-peroxidase (758 aa).

Over residues 1 to 10 the composition is skewed to polar residues; the sequence is MSDTQDNAPA. A disordered region spans residues 1 to 59; that stretch reads MSDTQDNAPASAQGVDQKAAAGCPVAHDSVTAHGSESESPAIDSPTPHSGGRPRTNRDW. A cross-link (tryptophyl-tyrosyl-methioninium (Trp-Tyr) (with M-276)) is located at residues 128 to 250; the sequence is WHAAGTYRID…VGATEMGLIY (123 aa). Residue His129 is the Proton acceptor of the active site. A cross-link (tryptophyl-tyrosyl-methioninium (Tyr-Met) (with W-128)) is located at residues 250–276; it reads YVNPEGPRGNADPAAAAHFIRETFRRM. A heme b-binding site is contributed by His291.

Belongs to the peroxidase family. Peroxidase/catalase subfamily. In terms of assembly, homodimer or homotetramer. The cofactor is heme b. In terms of processing, formation of the three residue Trp-Tyr-Met cross-link is important for the catalase, but not the peroxidase activity of the enzyme.

It carries out the reaction H2O2 + AH2 = A + 2 H2O. The catalysed reaction is 2 H2O2 = O2 + 2 H2O. Bifunctional enzyme with both catalase and broad-spectrum peroxidase activity. The chain is Catalase-peroxidase from Salinispora arenicola (strain CNS-205).